Consider the following 205-residue polypeptide: Holliday junction branch migration complex subunit RuvA (205 aa).

A domain I region spans residues 1-63 (MIDFVEGTLS…EDAILLYGFA (63 aa)). The segment at 64–142 (TRDERDLFRK…GYTPSAILTV (79 aa)) is domain II. Positions 143–153 (AAGDLTAGEQA) are flexible linker. A domain III region spans residues 153–205 (AVSALNEALDALTALGYSDGELQKIRNTLSEKSKEGDGVEKLIKQGLALLMRG).

This sequence belongs to the RuvA family. In terms of assembly, homotetramer. Forms an RuvA(8)-RuvB(12)-Holliday junction (HJ) complex. HJ DNA is sandwiched between 2 RuvA tetramers; dsDNA enters through RuvA and exits via RuvB. An RuvB hexamer assembles on each DNA strand where it exits the tetramer. Each RuvB hexamer is contacted by two RuvA subunits (via domain III) on 2 adjacent RuvB subunits; this complex drives branch migration. In the full resolvosome a probable DNA-RuvA(4)-RuvB(12)-RuvC(2) complex forms which resolves the HJ.

It is found in the cytoplasm. In terms of biological role, the RuvA-RuvB-RuvC complex processes Holliday junction (HJ) DNA during genetic recombination and DNA repair, while the RuvA-RuvB complex plays an important role in the rescue of blocked DNA replication forks via replication fork reversal (RFR). RuvA specifically binds to HJ cruciform DNA, conferring on it an open structure. The RuvB hexamer acts as an ATP-dependent pump, pulling dsDNA into and through the RuvAB complex. HJ branch migration allows RuvC to scan DNA until it finds its consensus sequence, where it cleaves and resolves the cruciform DNA. The polypeptide is Holliday junction branch migration complex subunit RuvA (Brevibacillus brevis (strain 47 / JCM 6285 / NBRC 100599)).